The chain runs to 366 residues: Beta sliding clamp (366 aa).

Belongs to the beta sliding clamp family. In terms of assembly, forms a ring-shaped head-to-tail homodimer around DNA which binds and tethers DNA polymerases and other proteins to the DNA. The DNA replisome complex has a single clamp-loading complex (3 tau and 1 each of delta, delta', psi and chi subunits) which binds 3 Pol III cores (1 core on the leading strand and 2 on the lagging strand) each with a beta sliding clamp dimer. Additional proteins in the replisome are other copies of gamma, psi and chi, Ssb, DNA helicase and RNA primase.

The protein resides in the cytoplasm. Functionally, confers DNA tethering and processivity to DNA polymerases and other proteins. Acts as a clamp, forming a ring around DNA (a reaction catalyzed by the clamp-loading complex) which diffuses in an ATP-independent manner freely and bidirectionally along dsDNA. Initially characterized for its ability to contact the catalytic subunit of DNA polymerase III (Pol III), a complex, multichain enzyme responsible for most of the replicative synthesis in bacteria; Pol III exhibits 3'-5' exonuclease proofreading activity. The beta chain is required for initiation of replication as well as for processivity of DNA replication. The protein is Beta sliding clamp (dnaN) of Buchnera aphidicola subsp. Rhopalosiphum padi.